Here is a 727-residue protein sequence, read N- to C-terminus: Catalase-peroxidase (727 aa).

Residues 1 to 26 (MSDEKKCPVTGRTSSQVAGSGTSNKD) form a disordered region. Residues 11 to 26 (GRTSSQVAGSGTSNKD) are compositionally biased toward polar residues. Residues 96–219 (WHSAGTYRIG…LAAVQMGLIY (124 aa)) constitute a cross-link (tryptophyl-tyrosyl-methioninium (Trp-Tyr) (with M-245)). The active-site Proton acceptor is His-97. The tryptophyl-tyrosyl-methioninium (Tyr-Met) (with W-96) cross-link spans 219-245 (YVNPEGPNGDPNAVASGKDVRETFARM). His-260 is a heme b binding site. A compositionally biased stretch (basic and acidic residues) spans 346–362 (SDPEAKKAVPDAHDPSK). The interval 346 to 365 (SDPEAKKAVPDAHDPSKTHP) is disordered.

This sequence belongs to the peroxidase family. Peroxidase/catalase subfamily. As to quaternary structure, homodimer or homotetramer. Heme b is required as a cofactor. In terms of processing, formation of the three residue Trp-Tyr-Met cross-link is important for the catalase, but not the peroxidase activity of the enzyme.

It catalyses the reaction H2O2 + AH2 = A + 2 H2O. The enzyme catalyses 2 H2O2 = O2 + 2 H2O. Functionally, bifunctional enzyme with both catalase and broad-spectrum peroxidase activity. This chain is Catalase-peroxidase, found in Maridesulfovibrio salexigens (strain ATCC 14822 / DSM 2638 / NCIMB 8403 / VKM B-1763) (Desulfovibrio salexigens).